A 141-amino-acid polypeptide reads, in one-letter code: VLSAADKTNVKSAFSKIGGQADEYGAETLERMFATYPQTKTYFPHFDLGKGSAQVKAHGKKVAAALVEAANAVDDIAGALSKLSDLHAQKLRVDPVNFKLLGQCFLVTVATHNPSLLTPEVHASLDKFLCAVGTVLTAKYR.

One can recognise a Globin domain in the interval 1–141 (VLSAADKTNV…VGTVLTAKYR (141 aa)). An O2-binding site is contributed by H58. H87 contacts heme b.

This sequence belongs to the globin family. In terms of assembly, heterotetramer of two alpha chains and two beta chains. As to expression, red blood cells.

In terms of biological role, involved in oxygen transport from the lung to the various peripheral tissues. The chain is Hemoglobin subunit alpha-A (HBAA) from Turdus merula (Common blackbird).